The following is a 331-amino-acid chain: Aflatoxin B1 aldehyde reductase member 4 (331 aa).

Aspartate 44 contacts NADP(+). Tyrosine 49 functions as the Proton donor in the catalytic mechanism. Residue serine 85 is modified to Phosphoserine. A substrate-binding site is contributed by histidine 113. Residues 143 to 144 (SN), glutamine 169, 198 to 208 (NPLAGGLLTGK), and arginine 222 each bind NADP(+). Residue tyrosine 232 coordinates substrate. 290–298 (SSLEQLEQN) contributes to the NADP(+) binding site.

This sequence belongs to the aldo/keto reductase family. Aldo/keto reductase 2 subfamily. As to expression, mainly expressed in uterus.

Can reduce the dialdehyde protein-binding form of aflatoxin B1 (AFB1) to the non-binding AFB1 dialcohol. May be involved in protection of liver against the toxic and carcinogenic effects of AFB1, a potent hepatocarcinogen. This is Aflatoxin B1 aldehyde reductase member 4 (AKR7L) from Homo sapiens (Human).